We begin with the raw amino-acid sequence, 359 residues long: G-protein coupled receptor 15 (359 aa).

The Extracellular segment spans residues 1-33 (MDPEETSVYLDYYYATSPNPDIRETHSHVPYTS). The chain crosses the membrane as a helical span at residues 34–54 (VFLPVFYTAVFLTGVLGNLVL). The Cytoplasmic segment spans residues 55 to 69 (MGALHFKPGSRRLID). The helical transmembrane segment at 70–90 (IFIINLAASDFIFLVTLPLWV) threads the bilayer. The Extracellular portion of the chain corresponds to 91–120 (DKEASLGLWRTGSFLCKGSSYMISVNMHCS). The chain crosses the membrane as a helical span at residues 121–141 (VFLLTCMSVDRYLAIVCPVVS). The Cytoplasmic segment spans residues 142 to 149 (RKFRRTDC). The chain crosses the membrane as a helical span at residues 150 to 170 (AYVVCASIWFISCLLGLPTLL). Residues 171–192 (SRELTLIDDKPYCAEKKATPLK) lie on the Extracellular side of the membrane. The chain crosses the membrane as a helical span at residues 193-213 (LIWSLVALIFTFFVPLLNIVT). Over 214-239 (CYCCIARKLCAHYQQSGRHNKKLKKS) the chain is Cytoplasmic. A helical transmembrane segment spans residues 240–260 (IKIILIVVAAFLVSWLPFNTF). The Extracellular portion of the chain corresponds to 261 to 283 (KLLAIVSGLQERYFPSAMLQLGM). The helical transmembrane segment at 284 to 304 (EVSGPLAFANSCVNPFIYYIF) threads the bilayer. Topologically, residues 305 to 359 (DSYIRRAIVHCLCPCLKNYDFGSSTETSDSHLTKALSTFIHAEDFTRRRKRSVSL) are cytoplasmic. At Ser358 the chain carries Phosphoserine.

This sequence belongs to the G-protein coupled receptor 1 family. In terms of assembly, interacts with adapter YWHAE; this interaction promotes ER-to-Golgi transport of GPR15. Post-translationally, phosphorylation is necessary for YWHAE binding and efficient surface expression. O-glycosylated. Sialylated O-glycans in the N-terminal tail inhibits binding of GPR15LG. In terms of processing, sulfation is required for efficient binding of GPR15LG.

Its subcellular location is the cell membrane. G protein-coupled receptor that plays an important role in immune homeostasis. Acts via its natural ligand GPR15LG, a chemokine-like polypeptide strongly expressed in gastrointestinal tissues. GPR15-GPR15LG signaling axis regulates intestinal homeostasis and inflammation through the migration of immune cells. Controls thereby the specific homing of T-cells, particularly FOXP3+ regulatory T-cells (Tregs), to the large intestine lamina propria. Also required for skin localization of thymus-derived dendritic epidermal T-cells. Plays an important role in mediating cytoprotective function as well as angiogenesis of thrombomodulin. Mechanistically, preferentially signals through the Gi/o pathway to inhibit adenylate cyclase activity and activate a phosphatidylinositol-calcium second messenger system that regulates the release of Ca(2+) ions from intracellular stores. This Macaca fascicularis (Crab-eating macaque) protein is G-protein coupled receptor 15 (GPR15).